The sequence spans 146 residues: Hemoglobin subunit beta (146 aa).

Residues 2 to 146 (QWTAEEKQLI…VAHALARKYH (145 aa)) enclose the Globin domain. H63 and H92 together coordinate heme b.

The protein belongs to the globin family. Heterotetramer of two alpha chains and two beta chains. As to expression, red blood cells.

In terms of biological role, involved in oxygen transport from the lung to the various peripheral tissues. This chain is Hemoglobin subunit beta (HBB), found in Sturnus vulgaris (Starling).